The chain runs to 113 residues: Nucleoid-associated protein EUBREC_0329 (113 aa).

The segment covering 1 to 12 has biased composition (gly residues); the sequence is MARRGGFPGGMP. The segment at 1–45 is disordered; it reads MARRGGFPGGMPGNMNNLMKQAQKMQRQMEEAQKQLEDAEVTAKA. Residues 27 to 37 show a composition bias toward basic and acidic residues; that stretch reads RQMEEAQKQLE.

Belongs to the YbaB/EbfC family. In terms of assembly, homodimer.

The protein resides in the cytoplasm. Its subcellular location is the nucleoid. In terms of biological role, binds to DNA and alters its conformation. May be involved in regulation of gene expression, nucleoid organization and DNA protection. This chain is Nucleoid-associated protein EUBREC_0329, found in Agathobacter rectalis (strain ATCC 33656 / DSM 3377 / JCM 17463 / KCTC 5835 / VPI 0990) (Eubacterium rectale).